A 158-amino-acid polypeptide reads, in one-letter code: Putative metalloproteinase inhibitor tag-225 (158 aa).

The N-terminal stretch at 1–20 is a signal peptide; the sequence is MQNLSLSLVILSVLIAVTLA. Cys21 is a binding site for Zn(2+). Residues 21–25 form an involved in metalloproteinase-binding region; sequence CKCRE. 3 disulfide bridges follow: Cys21-Cys96, Cys23-Cys123, and Cys33-Cys158. An NTR domain is found at 21–158; that stretch reads CKCREQSTKE…LQSQVKSIKC (138 aa). Asn79 carries N-linked (GlcNAc...) asparagine glycosylation. Residues 93-94 form an involved in metalloproteinase-binding region; the sequence is AP.

The protein belongs to the protease inhibitor I35 (TIMP) family.

It localises to the secreted. Functionally, complexes with metalloproteinases and irreversibly inactivates them by binding to their catalytic zinc cofactor. The chain is Putative metalloproteinase inhibitor tag-225 (tag-225) from Caenorhabditis elegans.